The following is a 244-amino-acid chain: uncharacterized protein (244 aa).

Composition is skewed to basic and acidic residues over residues 1 to 10 and 100 to 127; these read MNDPFARMET and GTRG…HGEE. Disordered stretches follow at residues 1–79, 100–130, and 219–244; these read MNDP…GEEL, GTRG…EPNY, and TGAS…EIKL.

This is an uncharacterized protein from Homo sapiens (Human).